Here is a 434-residue protein sequence, read N- to C-terminus: Enolase (434 aa).

Gln-167 contacts (2R)-2-phosphoglycerate. Catalysis depends on Glu-209, which acts as the Proton donor. Mg(2+)-binding residues include Asp-246, Glu-291, and Asp-318. Residues Lys-343, Arg-372, Ser-373, and Lys-394 each contribute to the (2R)-2-phosphoglycerate site. Lys-343 (proton acceptor) is an active-site residue.

This sequence belongs to the enolase family. Component of the RNA degradosome, a multiprotein complex involved in RNA processing and mRNA degradation. The cofactor is Mg(2+).

It localises to the cytoplasm. It is found in the secreted. Its subcellular location is the cell surface. It catalyses the reaction (2R)-2-phosphoglycerate = phosphoenolpyruvate + H2O. It functions in the pathway carbohydrate degradation; glycolysis; pyruvate from D-glyceraldehyde 3-phosphate: step 4/5. Functionally, catalyzes the reversible conversion of 2-phosphoglycerate (2-PG) into phosphoenolpyruvate (PEP). It is essential for the degradation of carbohydrates via glycolysis. This Buchnera aphidicola subsp. Schizaphis graminum (strain Sg) protein is Enolase.